Consider the following 328-residue polypeptide: Biotin synthase (328 aa).

In terms of domain architecture, Radical SAM core spans 41 to 260 (TAIETASLLS…VALARILMPA (220 aa)). Residues Cys56, Cys60, and Cys63 each contribute to the [4Fe-4S] cluster site. Cys100, Cys131, Cys191, and Arg264 together coordinate [2Fe-2S] cluster.

The protein belongs to the radical SAM superfamily. Biotin synthase family. As to quaternary structure, homodimer. Requires [4Fe-4S] cluster as cofactor. [2Fe-2S] cluster is required as a cofactor.

It catalyses the reaction (4R,5S)-dethiobiotin + (sulfur carrier)-SH + 2 reduced [2Fe-2S]-[ferredoxin] + 2 S-adenosyl-L-methionine = (sulfur carrier)-H + biotin + 2 5'-deoxyadenosine + 2 L-methionine + 2 oxidized [2Fe-2S]-[ferredoxin]. The protein operates within cofactor biosynthesis; biotin biosynthesis; biotin from 7,8-diaminononanoate: step 2/2. In terms of biological role, catalyzes the conversion of dethiobiotin (DTB) to biotin by the insertion of a sulfur atom into dethiobiotin via a radical-based mechanism. The polypeptide is Biotin synthase (Cereibacter sphaeroides (strain ATCC 17023 / DSM 158 / JCM 6121 / CCUG 31486 / LMG 2827 / NBRC 12203 / NCIMB 8253 / ATH 2.4.1.) (Rhodobacter sphaeroides)).